The chain runs to 426 residues: Protein PHOSPHATE STARVATION RESPONSE 2 (426 aa).

Disordered stretches follow at residues 27–81, 96–123, and 198–247; these read ATLD…PLRS, YTNA…QYGG, and TQPQ…NSKT. Residues 69-81 show a composition bias toward polar residues; sequence FQSSTGSVGPLRS. 2 stretches are compositionally biased toward low complexity: residues 102–119 and 205–225; these read YNSQ…NYGS and AAQS…SSQS. The segment covering 237–246 has biased composition (polar residues); sequence SGASNTSNSK. The 61-residue stretch at 243–303 folds into the HTH myb-type domain; that stretch reads SNSKTRMRWT…HLQKYRTARY (61 aa). The segment at residues 274-299 is a DNA-binding region (H-T-H motif); sequence PKGVLKLMKADNLTIYHVKSHLQKYR. 2 disordered regions span residues 302–326 and 382–426; these read RYRP…PSID and DKAV…SGDR. The segment covering 303 to 322 has biased composition (basic and acidic residues); that stretch reads YRPELSEGSSEKKAASKEDI. Polar residues-rich tracts occupy residues 387–401 and 411–426; these read ASTS…SDLP and ENSQ…SGDR.

Interacts (via C-terminus) with SPX4 (via N-terminus) in the presence of inositol polyphosphate. Interacts (via C-terminus) with SPX1 and SPX2 (via SPX domain). Interacts with RLI1 in the nucleus.

The protein localises to the nucleus. It localises to the cytoplasm. In terms of biological role, transcription factor involved in phosphate starvation signaling. Binds to P1BS, an imperfect palindromic sequence 5'-GNATATNC-3', to promote the expression of inorganic phosphate (Pi) starvation-responsive genes. Functionally redundant with PHR1 and PHR3 in regulating Pi starvation response and Pi homeostasis. Involved in both systematic and local Pi-signaling pathways. Regulates several Pi transporters. PHR2 binding to DNA is repressed redundantly by SPX1, SPX2 and SPX4 in a PI-dependent manner. The DNA-binding activity is also repressed by SPX4. Involved in root growth under Pi deprivation. Involved in the modulation of Pi response and homeostasis together with RLI1; promotes RLI1 expression in response to nitrate availability, thus triggering the nitrate-induced phosphate response (NIPR). This Oryza sativa subsp. indica (Rice) protein is Protein PHOSPHATE STARVATION RESPONSE 2.